Here is a 496-residue protein sequence, read N- to C-terminus: NADP-dependent glyceraldehyde-3-phosphate dehydrogenase (496 aa).

Residues arginine 116 and 169–170 (NY) contribute to the substrate site. Lysine 192, threonine 195, and aspartate 230 together coordinate NADP(+). 245 to 249 (GGDTG) is an NAD(+) binding site. Glutamate 264 acts as the Proton acceptor in catalysis. 297–299 (RCT) provides a ligand contact to substrate. Catalysis depends on cysteine 298, which acts as the Nucleophile. Glutamate 391 contributes to the NADP(+) binding site. Arginine 451 contacts substrate.

It belongs to the aldehyde dehydrogenase family.

It is found in the cytoplasm. The catalysed reaction is D-glyceraldehyde 3-phosphate + NADP(+) + H2O = (2R)-3-phosphoglycerate + NADPH + 2 H(+). Functionally, important as a means of generating NADPH for biosynthetic reactions. In Pisum sativum (Garden pea), this protein is NADP-dependent glyceraldehyde-3-phosphate dehydrogenase (GAPN).